The following is a 565-amino-acid chain: uncharacterized protein (565 aa).

10 helical membrane-spanning segments follow: residues 28–48 (IFHF…LPFA), 73–93 (ASYG…DTGL), 109–129 (VLAI…FLVW), 169–189 (LFLF…FYFI), 262–282 (IVIQ…YPVL), 315–335 (LIVT…VITS), 364–384 (SLIF…FGVI), 393–413 (VFPW…AMFI), 461–481 (AFLV…LLPL), and 526–546 (TLGL…LTFV).

Belongs to the TrkH potassium transport family.

It localises to the cell membrane. This is an uncharacterized protein from Mycoplasma pneumoniae (strain ATCC 29342 / M129 / Subtype 1) (Mycoplasmoides pneumoniae).